The following is a 534-amino-acid chain: Unguisins hydrolase ungD' (534 aa).

It belongs to the peptidase S12 family.

Its pathway is secondary metabolite biosynthesis. In terms of biological role, hydrolase; part of the gene cluster that mediates the biosynthesis of the unguisins, gamma-aminobutyric acid (GABA)-containing fungal cyclic heptapeptides with the amino acid sequence cyclo-(D-Ala1-D-Val2-L-Leu3-beta-MePhe4-D-Ala5-D-Trp6-GABA7) for unguisin H and cyclo-(D-Ala1-D-Ala2-L-Leu3-beta-MePhe4-D-Ala5-D-Trp6-GABA7) for unguisin I. Within the pathway, the hydrolase ungD' catalyzes the hydrolysis between the D-tryptophan and GABA residues of unguisins H and I to produce the corresponding linear peptides. The alanine racemase ungC' catalyzes the interconversion of L-alanine and D-alanine, providing the D-alanine which is accepted by the first adenylation domain of the nonribosomal peptide synthetase (NRPS) ungA', whereas the methyltransferase ungE' provides the (2R,3R)-beta-methylphenylalanine residue incorporated by the module 4. UngA' is the main enzyme within the cluster which condenses the 7 residues using its respective 7 modules. The terminal condensation domain (Ct) is involved in cyclization with D-alanine and thereby releasing of unguisins H and I. This chain is Unguisins hydrolase ungD', found in Aspergillus campestris (strain IBT 28561).